We begin with the raw amino-acid sequence, 80 residues long: Exodeoxyribonuclease 7 small subunit (80 aa).

The protein belongs to the XseB family. As to quaternary structure, heterooligomer composed of large and small subunits.

It localises to the cytoplasm. The enzyme catalyses Exonucleolytic cleavage in either 5'- to 3'- or 3'- to 5'-direction to yield nucleoside 5'-phosphates.. In terms of biological role, bidirectionally degrades single-stranded DNA into large acid-insoluble oligonucleotides, which are then degraded further into small acid-soluble oligonucleotides. The protein is Exodeoxyribonuclease 7 small subunit of Klebsiella pneumoniae (strain 342).